We begin with the raw amino-acid sequence, 146 residues long: 3-dehydroquinate dehydratase (146 aa).

Tyrosine 22 functions as the Proton acceptor in the catalytic mechanism. Substrate is bound by residues asparagine 73, histidine 79, and aspartate 86. The Proton donor role is filled by histidine 99. Residues 100–101 (LS) and arginine 110 contribute to the substrate site.

Belongs to the type-II 3-dehydroquinase family. As to quaternary structure, homododecamer.

The catalysed reaction is 3-dehydroquinate = 3-dehydroshikimate + H2O. Its pathway is metabolic intermediate biosynthesis; chorismate biosynthesis; chorismate from D-erythrose 4-phosphate and phosphoenolpyruvate: step 3/7. Its function is as follows. Catalyzes a trans-dehydration via an enolate intermediate. In Parasynechococcus marenigrum (strain WH8102), this protein is 3-dehydroquinate dehydratase.